The chain runs to 596 residues: Chaperonin 60 subunit beta 2, chloroplastic (596 aa).

The N-terminal 50 residues, 1–50 (MASTFTATSSLGSLLAPNAIKLSSATSISSSSFGRRHNVCVRRSRPAIVC), are a transit peptide targeting the chloroplast. 2 positions are modified to phosphoserine: S97 and S474. A coiled-coil region spans residues 388–489 (TQEAVNKRVV…KDTLENDEEK (102 aa)).

The protein belongs to the chaperonin (HSP60) family. Part of the Cpn60 complex composed of 7 alpha and 7 beta subunits. Can also form a complex composed of 14 beta subunits only. Both complexes show ATPase activity. The Cpn60 complex interacts with the Cpn10 complex. Interacts with RAB during heat stress.

The protein localises to the plastid. It localises to the chloroplast stroma. Involved in protein assisted folding. The sequence is that of Chaperonin 60 subunit beta 2, chloroplastic (CPN60B2) from Arabidopsis thaliana (Mouse-ear cress).